Consider the following 432-residue polypeptide: Acyl-CoA dehydrogenase AFT10-1 (432 aa).

Belongs to the acyl-CoA dehydrogenase family. FAD is required as a cofactor.

The protein operates within mycotoxin biosynthesis. In terms of biological role, acyl-CoA dehydrogenase; part of the gene clusters that mediate the biosynthesis of the host-selective toxins (HSTs) AF-toxins responsible for Alternaria black spot of strawberry disease by the strawberry pathotype. AF-toxin I and III are valine derivatives of 2,3-dyhydroxy-isovaleric acid and 2-hydroxy-isovaleric acid respectively, while AF II is an isoleucine derivative of 2-hydroxy-valeric acid. These derivatives are bound to a 9,10-epoxy-8-hydroxy-9-methyl-decatrienoic acid (EDA) moiety. On cellular level, AF-toxins affect plasma membrane of susceptible cells and cause a sudden increase in loss of K(+) after a few minutes of toxin treatment. The aldo-keto reductase AFTS1 catalyzes the conversion of 2-keto-isovaleric acid (2-KIV) to 2-hydroxy-isovaleric acid (2-HIV) by reduction of its ketone to an alcohol. The acyl-CoA ligase AFT1, the hydrolase AFT2 and the enoyl-CoA hydratases AFT3 and AFT6, but also the polyketide synthase AFT9, the acyl-CoA dehydrogenase AFT10, the cytochrome P450 monooxygenase AFT11 and the oxidoreductase AFT12 are all involved in the biosynthesis of the AK-, AF- and ACT-toxin common EDA structural moiety. The exact function of each enzyme, and of additional enzymes identified within the AF-toxin clusters have still to be determined. In Alternaria alternata (Alternaria rot fungus), this protein is Acyl-CoA dehydrogenase AFT10-1.